The following is a 312-amino-acid chain: Olfactory receptor 6C75 (312 aa).

Residues Met-1–Val-23 are Extracellular-facing. N-linked (GlcNAc...) asparagine glycosylation occurs at Asn-3. The helical transmembrane segment at Val-24–Ile-44 threads the bilayer. Residues Thr-45 to Asn-63 lie on the Cytoplasmic side of the membrane. The helical transmembrane segment at Phe-64 to Val-84 threads the bilayer. At Thr-85 to Cys-95 the chain is on the extracellular side. Residues Cys-95 and Cys-177 are joined by a disulfide bond. The chain crosses the membrane as a helical span at residues Val-96–Met-116. At Ser-117–Thr-140 the chain is on the cytoplasmic side. Residues Leu-141–Leu-161 traverse the membrane as a helical segment. Topologically, residues Leu-162–Glu-194 are extracellular. A helical transmembrane segment spans residues Leu-195–Ser-215. Over Tyr-216 to Ser-237 the chain is Cytoplasmic. Residues Thr-238 to Ile-258 form a helical membrane-spanning segment. The Extracellular portion of the chain corresponds to Lys-259–Ser-269. The helical transmembrane segment at Lys-270 to Leu-290 threads the bilayer. Topologically, residues Arg-291–Lys-312 are cytoplasmic.

It belongs to the G-protein coupled receptor 1 family.

It localises to the cell membrane. Its function is as follows. Odorant receptor. This chain is Olfactory receptor 6C75 (OR6C75), found in Homo sapiens (Human).